The following is a 137-amino-acid chain: NADPH-dependent 7-cyano-7-deazaguanine reductase (137 aa).

The active-site Thioimide intermediate is cysteine 50. Aspartate 57 acts as the Proton donor in catalysis. Substrate is bound by residues valine 72–leucine 74 and histidine 91–glutamate 92.

The protein belongs to the GTP cyclohydrolase I family. QueF type 1 subfamily.

Its subcellular location is the cytoplasm. The catalysed reaction is 7-aminomethyl-7-carbaguanine + 2 NADP(+) = 7-cyano-7-deazaguanine + 2 NADPH + 3 H(+). The protein operates within tRNA modification; tRNA-queuosine biosynthesis. In terms of biological role, catalyzes the NADPH-dependent reduction of 7-cyano-7-deazaguanine (preQ0) to 7-aminomethyl-7-deazaguanine (preQ1). The polypeptide is NADPH-dependent 7-cyano-7-deazaguanine reductase (Synechococcus sp. (strain CC9902)).